The primary structure comprises 95 residues: Phospholipase A2 inhibitor gammaCdcPLI (95 aa).

4 disulfide bridges follow: Cys2-Cys26, Cys5-Cys12, Cys19-Cys30, and Cys61-Cys77.

Forms dimers or higher order oligomers in a temperature-dependent manner in vitro. As to expression, expressed by the liver.

Its subcellular location is the secreted. Functionally, inhibits the enzymatic activity of basic and acidic PLA2 from B.jararacussu and B.pauloensis, respectively, in a dose-dependent manner. Also inhibits myotoxicity and cytotoxicity of BnSp-7 of B.pauloensis. This is Phospholipase A2 inhibitor gammaCdcPLI from Crotalus durissus collilineatus (Brazilian rattlesnake).